The sequence spans 304 residues: Acetyl-coenzyme A carboxylase carboxyl transferase subunit beta (304 aa).

The region spanning 25 to 294 is the CoA carboxyltransferase N-terminal domain; sequence VWTKCDSCGQ…PSVVESKADT (270 aa). Zn(2+) contacts are provided by C29, C32, C48, and C51. The C4-type zinc-finger motif lies at 29 to 51; it reads CDSCGQVLYRAELERNLEVCPKC.

The protein belongs to the AccD/PCCB family. As to quaternary structure, acetyl-CoA carboxylase is a heterohexamer composed of biotin carboxyl carrier protein (AccB), biotin carboxylase (AccC) and two subunits each of ACCase subunit alpha (AccA) and ACCase subunit beta (AccD). Zn(2+) is required as a cofactor.

It localises to the cytoplasm. It carries out the reaction N(6)-carboxybiotinyl-L-lysyl-[protein] + acetyl-CoA = N(6)-biotinyl-L-lysyl-[protein] + malonyl-CoA. Its pathway is lipid metabolism; malonyl-CoA biosynthesis; malonyl-CoA from acetyl-CoA: step 1/1. Functionally, component of the acetyl coenzyme A carboxylase (ACC) complex. Biotin carboxylase (BC) catalyzes the carboxylation of biotin on its carrier protein (BCCP) and then the CO(2) group is transferred by the transcarboxylase to acetyl-CoA to form malonyl-CoA. The protein is Acetyl-coenzyme A carboxylase carboxyl transferase subunit beta of Yersinia pestis bv. Antiqua (strain Nepal516).